The primary structure comprises 414 residues: Serine/threonine transporter SstT (414 aa).

Transmembrane regions (helical) follow at residues 16 to 36 (GSLV…AWIS), 46 to 66 (LGTL…LMLV), 84 to 104 (ILFL…VFSF), 143 to 163 (ALLN…GFAL), 180 to 200 (AVTF…FGLV), 219 to 239 (LVVL…LLVF), 300 to 320 (MAGA…TLGV), and 332 to 352 (VVAS…LLLI).

Belongs to the dicarboxylate/amino acid:cation symporter (DAACS) (TC 2.A.23) family.

The protein resides in the cell inner membrane. The enzyme catalyses L-serine(in) + Na(+)(in) = L-serine(out) + Na(+)(out). It carries out the reaction L-threonine(in) + Na(+)(in) = L-threonine(out) + Na(+)(out). Involved in the import of serine and threonine into the cell, with the concomitant import of sodium (symport system). The protein is Serine/threonine transporter SstT of Salmonella heidelberg (strain SL476).